The following is a 303-amino-acid chain: 4-hydroxy-3-methylbut-2-enyl diphosphate reductase (303 aa).

Cys-12 serves as a coordination point for [4Fe-4S] cluster. 2 residues coordinate (2E)-4-hydroxy-3-methylbut-2-enyl diphosphate: His-42 and His-75. 2 residues coordinate dimethylallyl diphosphate: His-42 and His-75. 2 residues coordinate isopentenyl diphosphate: His-42 and His-75. Cys-97 contacts [4Fe-4S] cluster. A (2E)-4-hydroxy-3-methylbut-2-enyl diphosphate-binding site is contributed by His-125. His-125 is a binding site for dimethylallyl diphosphate. Residue His-125 participates in isopentenyl diphosphate binding. Glu-127 (proton donor) is an active-site residue. Ser-164 is a (2E)-4-hydroxy-3-methylbut-2-enyl diphosphate binding site. Cys-192 is a [4Fe-4S] cluster binding site. (2E)-4-hydroxy-3-methylbut-2-enyl diphosphate contacts are provided by Ser-220, Ser-221, Asn-222, and Ser-264. 4 residues coordinate dimethylallyl diphosphate: Ser-220, Ser-221, Asn-222, and Ser-264. Isopentenyl diphosphate is bound by residues Ser-220, Ser-221, Asn-222, and Ser-264.

The protein belongs to the IspH family. [4Fe-4S] cluster is required as a cofactor.

The enzyme catalyses isopentenyl diphosphate + 2 oxidized [2Fe-2S]-[ferredoxin] + H2O = (2E)-4-hydroxy-3-methylbut-2-enyl diphosphate + 2 reduced [2Fe-2S]-[ferredoxin] + 2 H(+). It catalyses the reaction dimethylallyl diphosphate + 2 oxidized [2Fe-2S]-[ferredoxin] + H2O = (2E)-4-hydroxy-3-methylbut-2-enyl diphosphate + 2 reduced [2Fe-2S]-[ferredoxin] + 2 H(+). Its pathway is isoprenoid biosynthesis; dimethylallyl diphosphate biosynthesis; dimethylallyl diphosphate from (2E)-4-hydroxy-3-methylbutenyl diphosphate: step 1/1. It participates in isoprenoid biosynthesis; isopentenyl diphosphate biosynthesis via DXP pathway; isopentenyl diphosphate from 1-deoxy-D-xylulose 5-phosphate: step 6/6. Functionally, catalyzes the conversion of 1-hydroxy-2-methyl-2-(E)-butenyl 4-diphosphate (HMBPP) into a mixture of isopentenyl diphosphate (IPP) and dimethylallyl diphosphate (DMAPP). Acts in the terminal step of the DOXP/MEP pathway for isoprenoid precursor biosynthesis. The chain is 4-hydroxy-3-methylbut-2-enyl diphosphate reductase from Neorickettsia sennetsu (strain ATCC VR-367 / Miyayama) (Ehrlichia sennetsu).